Reading from the N-terminus, the 312-residue chain is Calcium-independent mitochondrial carrier protein SCaMC-3L (312 aa).

Solcar repeat units follow at residues 27 to 113 (GTLW…SRNF), 121 to 206 (PSFQ…LRCL), and 217 to 304 (PSGL…MKKT). A run of 6 helical transmembrane segments spans residues 33 to 50 (LLSGAMAGAVSRTGTAPL), 88 to 107 (GNGINVLKIAPEYAIKFSVF), 131 to 144 (SLAVAISQTLINPM), 182 to 200 (YLPNMLGIIPYACTDLAVY), 219 to 243 (GLVSLSSVTLSTTCGQMASYPLTLV), and 279 to 298 (GMTPTLLKVLPAGGISYLVY).

The protein belongs to the mitochondrial carrier (TC 2.A.29) family. As to expression, mainly expressed in testis and at lesser levels in brain.

It is found in the mitochondrion inner membrane. The catalysed reaction is Mg(2+)(out) + phosphate(in) + ATP(out) = Mg(2+)(in) + phosphate(out) + ATP(in). The enzyme catalyses ADP(out) + phosphate(in) + H(+)(out) = ADP(in) + phosphate(out) + H(+)(in). Functionally, calcium-independent ATP-Mg/Pi exchanger that catalyzes the electroneutral exchange of Mg-ATP or free ADP against an hydrogenphosphate and participates in the net transport of adenine nucleotides across the mitochondria inner membrane. This Rattus norvegicus (Rat) protein is Calcium-independent mitochondrial carrier protein SCaMC-3L.